A 301-amino-acid polypeptide reads, in one-letter code: Glycine--tRNA ligase alpha subunit (301 aa).

Belongs to the class-II aminoacyl-tRNA synthetase family. Tetramer of two alpha and two beta subunits.

It localises to the cytoplasm. The catalysed reaction is tRNA(Gly) + glycine + ATP = glycyl-tRNA(Gly) + AMP + diphosphate. In Pseudoalteromonas atlantica (strain T6c / ATCC BAA-1087), this protein is Glycine--tRNA ligase alpha subunit.